Here is a 173-residue protein sequence, read N- to C-terminus: UPF0316 protein Bsph_0745 (173 aa).

3 helical membrane-spanning segments follow: residues 4–24 (IVLILILQLVYVPFLTLRTIF), 31–51 (FLAAIFGMLEMLVYVFGLSLV), and 58–78 (MLAMVVYAVGFGLGIFLGAKI).

The protein belongs to the UPF0316 family.

It localises to the cell membrane. In Lysinibacillus sphaericus (strain C3-41), this protein is UPF0316 protein Bsph_0745.